The following is a 389-amino-acid chain: Glycerol-3-phosphate dehydrogenase [NAD(+)] 2 (389 aa).

Residues 40 to 45 (GSGNWG), Phe128, Lys151, and Ala184 each bind NAD(+). Lys151 contributes to the substrate binding site. Lys244 functions as the Proton acceptor in the catalytic mechanism. Residues Arg309 and Gln338 each coordinate NAD(+). 309-310 (RN) contacts substrate.

Belongs to the NAD-dependent glycerol-3-phosphate dehydrogenase family.

The protein localises to the cytoplasm. It carries out the reaction sn-glycerol 3-phosphate + NAD(+) = dihydroxyacetone phosphate + NADH + H(+). This is Glycerol-3-phosphate dehydrogenase [NAD(+)] 2 (GPD2) from Zygosaccharomyces rouxii.